The following is a 2289-amino-acid chain: Protein Ycf2 (2289 aa).

ATP is bound at residue 1643–1650 (GSIGTGRS).

Belongs to the Ycf2 family.

Its subcellular location is the plastid. It is found in the chloroplast stroma. Its function is as follows. Probable ATPase of unknown function. Its presence in a non-photosynthetic plant (Epifagus virginiana) and experiments in tobacco indicate that it has an essential function which is probably not related to photosynthesis. In Aethionema grandiflorum (Persian stone-cress), this protein is Protein Ycf2.